The sequence spans 147 residues: Small ribosomal subunit protein bS6m (147 aa).

This sequence belongs to the bacterial ribosomal protein bS6 family. Component of the mitochondrial ribosome small subunit (28S) which comprises a 12S rRNA and about 30 distinct proteins.

The protein resides in the mitochondrion. The chain is Small ribosomal subunit protein bS6m (mRpS6) from Drosophila melanogaster (Fruit fly).